A 365-amino-acid polypeptide reads, in one-letter code: Probable L-tyrosine/L-aspartate decarboxylase (365 aa).

Lys225 is subject to N6-(pyridoxal phosphate)lysine.

Belongs to the group II decarboxylase family. MfnA subfamily. Pyridoxal 5'-phosphate is required as a cofactor.

It carries out the reaction L-tyrosine + H(+) = tyramine + CO2. The catalysed reaction is L-aspartate + H(+) = beta-alanine + CO2. It participates in cofactor biosynthesis; methanofuran biosynthesis. It functions in the pathway cofactor biosynthesis; coenzyme A biosynthesis. Catalyzes the decarboxylation of L-tyrosine to produce tyramine for methanofuran biosynthesis. Can also catalyze the decarboxylation of L-aspartate to produce beta-alanine for coenzyme A (CoA) biosynthesis. The protein is Probable L-tyrosine/L-aspartate decarboxylase of Methanocorpusculum labreanum (strain ATCC 43576 / DSM 4855 / Z).